Consider the following 301-residue polypeptide: Recombination-associated protein RdgC (301 aa).

This sequence belongs to the RdgC family.

The protein localises to the cytoplasm. It is found in the nucleoid. May be involved in recombination. The chain is Recombination-associated protein RdgC from Pseudoalteromonas atlantica (strain T6c / ATCC BAA-1087).